A 641-amino-acid polypeptide reads, in one-letter code: 1-deoxy-D-xylulose-5-phosphate synthase (641 aa).

Residues histidine 80 and glycine 121–serine 123 each bind thiamine diphosphate. A Mg(2+)-binding site is contributed by aspartate 152. Thiamine diphosphate-binding positions include glycine 153 to serine 154, asparagine 181, tyrosine 290, and glutamate 372. Asparagine 181 is a binding site for Mg(2+).

Belongs to the transketolase family. DXPS subfamily. As to quaternary structure, homodimer. Mg(2+) is required as a cofactor. Thiamine diphosphate serves as cofactor.

It carries out the reaction D-glyceraldehyde 3-phosphate + pyruvate + H(+) = 1-deoxy-D-xylulose 5-phosphate + CO2. It functions in the pathway metabolic intermediate biosynthesis; 1-deoxy-D-xylulose 5-phosphate biosynthesis; 1-deoxy-D-xylulose 5-phosphate from D-glyceraldehyde 3-phosphate and pyruvate: step 1/1. In terms of biological role, catalyzes the acyloin condensation reaction between C atoms 2 and 3 of pyruvate and glyceraldehyde 3-phosphate to yield 1-deoxy-D-xylulose-5-phosphate (DXP). The polypeptide is 1-deoxy-D-xylulose-5-phosphate synthase (Rhodobacter capsulatus (Rhodopseudomonas capsulata)).